Consider the following 287-residue polypeptide: Acetyl-coenzyme A carboxylase carboxyl transferase subunit beta (287 aa).

A CoA carboxyltransferase N-terminal domain is found at 36 to 287; sequence MWVKCDRCGK…KVLYKILELH (252 aa). Zn(2+) contacts are provided by Cys-40, Cys-43, Cys-59, and Cys-62. The C4-type zinc finger occupies 40–62; it reads CDRCGKTLYKKDLDENLKVCKFC.

This sequence belongs to the AccD/PCCB family. In terms of assembly, acetyl-CoA carboxylase is a heterohexamer composed of biotin carboxyl carrier protein (AccB), biotin carboxylase (AccC) and two subunits each of ACCase subunit alpha (AccA) and ACCase subunit beta (AccD). The cofactor is Zn(2+).

Its subcellular location is the cytoplasm. The enzyme catalyses N(6)-carboxybiotinyl-L-lysyl-[protein] + acetyl-CoA = N(6)-biotinyl-L-lysyl-[protein] + malonyl-CoA. It functions in the pathway lipid metabolism; malonyl-CoA biosynthesis; malonyl-CoA from acetyl-CoA: step 1/1. Functionally, component of the acetyl coenzyme A carboxylase (ACC) complex. Biotin carboxylase (BC) catalyzes the carboxylation of biotin on its carrier protein (BCCP) and then the CO(2) group is transferred by the transcarboxylase to acetyl-CoA to form malonyl-CoA. The protein is Acetyl-coenzyme A carboxylase carboxyl transferase subunit beta of Clostridium novyi (strain NT).